The primary structure comprises 98 residues: ESAT-6-like protein EsxW (98 aa).

This sequence belongs to the WXG100 family. CFP-10 subfamily. Forms a tight 1:1 complex with EsxV. The complex is destabilized at low pH. Unfolding of the proteins is required for dissociation of the complex and membrane binding.

It localises to the secreted. The polypeptide is ESAT-6-like protein EsxW (Mycobacterium tuberculosis (strain ATCC 25618 / H37Rv)).